Here is a 157-residue protein sequence, read N- to C-terminus: Crossover junction endodeoxyribonuclease RuvC (157 aa).

Residues aspartate 7, glutamate 67, and aspartate 140 contribute to the active site. Mg(2+) is bound by residues aspartate 7, glutamate 67, and aspartate 140.

It belongs to the RuvC family. As to quaternary structure, homodimer which binds Holliday junction (HJ) DNA. The HJ becomes 2-fold symmetrical on binding to RuvC with unstacked arms; it has a different conformation from HJ DNA in complex with RuvA. In the full resolvosome a probable DNA-RuvA(4)-RuvB(12)-RuvC(2) complex forms which resolves the HJ. Mg(2+) serves as cofactor.

Its subcellular location is the cytoplasm. It carries out the reaction Endonucleolytic cleavage at a junction such as a reciprocal single-stranded crossover between two homologous DNA duplexes (Holliday junction).. Its function is as follows. The RuvA-RuvB-RuvC complex processes Holliday junction (HJ) DNA during genetic recombination and DNA repair. Endonuclease that resolves HJ intermediates. Cleaves cruciform DNA by making single-stranded nicks across the HJ at symmetrical positions within the homologous arms, yielding a 5'-phosphate and a 3'-hydroxyl group; requires a central core of homology in the junction. The consensus cleavage sequence is 5'-(A/T)TT(C/G)-3'. Cleavage occurs on the 3'-side of the TT dinucleotide at the point of strand exchange. HJ branch migration catalyzed by RuvA-RuvB allows RuvC to scan DNA until it finds its consensus sequence, where it cleaves and resolves the cruciform DNA. In Rickettsia rickettsii (strain Iowa), this protein is Crossover junction endodeoxyribonuclease RuvC.